The following is a 452-amino-acid chain: Ribulose bisphosphate carboxylase large chain (452 aa).

Residues 1-2 (MS) constitute a propeptide that is removed on maturation. P3 carries the N-acetylproline modification. An N6,N6,N6-trimethyllysine modification is found at K14. Residues N123 and T173 each contribute to the substrate site. K175 (proton acceptor) is an active-site residue. K177 provides a ligand contact to substrate. Positions 201, 203, and 204 each coordinate Mg(2+). The residue at position 201 (K201) is an N6-carboxylysine. H294 acts as the Proton acceptor in catalysis. The substrate site is built by R295, X327, and S379.

This sequence belongs to the RuBisCO large chain family. Type I subfamily. In terms of assembly, heterohexadecamer of 8 large chains and 8 small chains; disulfide-linked. The disulfide link is formed within the large subunit homodimers. The cofactor is Mg(2+). Post-translationally, the disulfide bond which can form in the large chain dimeric partners within the hexadecamer appears to be associated with oxidative stress and protein turnover.

It is found in the plastid. The protein resides in the chloroplast. The enzyme catalyses 2 (2R)-3-phosphoglycerate + 2 H(+) = D-ribulose 1,5-bisphosphate + CO2 + H2O. It catalyses the reaction D-ribulose 1,5-bisphosphate + O2 = 2-phosphoglycolate + (2R)-3-phosphoglycerate + 2 H(+). RuBisCO catalyzes two reactions: the carboxylation of D-ribulose 1,5-bisphosphate, the primary event in carbon dioxide fixation, as well as the oxidative fragmentation of the pentose substrate in the photorespiration process. Both reactions occur simultaneously and in competition at the same active site. The chain is Ribulose bisphosphate carboxylase large chain from Salvadora persica (Toothbrush tree).